Here is a 191-residue protein sequence, read N- to C-terminus: UPF0669 protein C6orf120 homolog (191 aa).

A signal peptide spans 1–30 (MAAPRGRAAPWTTALLLLLTSQILSPGSCA). N-linked (GlcNAc...) asparagine glycosylation is present at Asn-53.

This sequence belongs to the UPF0669 family.

It localises to the secreted. May be involved in induction of apoptosis in CD4(+) T-cells, but not CD8(+) T-cells or hepatocytes. The protein is UPF0669 protein C6orf120 homolog of Macaca fascicularis (Crab-eating macaque).